The primary structure comprises 112 residues: Prothymosin alpha-B (112 aa).

The tract at residues 1-112 (MSDTAVDASV…TKKQKTDEDD (112 aa)) is disordered. The span at 9–35 (SVEKSTKDLKAKEKEVVEEAENGKDKP) shows a compositional bias: basic and acidic residues. Composition is skewed to acidic residues over residues 41–83 (ENEE…DEVE) and 92–101 (EDDEDDDDDV). Over residues 102–112 (ETKKQKTDEDD) the composition is skewed to basic and acidic residues.

Belongs to the pro/parathymosin family.

The protein localises to the nucleus. This chain is Prothymosin alpha-B (ptma-b), found in Xenopus laevis (African clawed frog).